The chain runs to 199 residues: ATP synthase subunit a (199 aa).

6 helical membrane passes run 2–22 (TNVYFLDIFMFVYVLQFLFYF), 25–45 (SMLGVLVNKFLGLLVVVFSYT), 53–73 (VISVFTFLVLLTCCFGGYFMY), 80–100 (MIEFTFVYAMVAWLSTLLTFI), 143–163 (VNVLVGHVISMMLYQLLELYL), and 164–184 (GIFYVWIVVLAIVMECFVFFI).

It belongs to the ATPase A chain family. F-type ATPases have 2 components, CF(1) - the catalytic core - and CF(0) - the membrane proton channel. CF(1) has five subunits: alpha(3), beta(3), gamma(1), delta(1), epsilon(1). CF(0) has three main subunits: a, b and c.

Its subcellular location is the mitochondrion inner membrane. Functionally, mitochondrial membrane ATP synthase (F(1)F(0) ATP synthase or Complex V) produces ATP from ADP in the presence of a proton gradient across the membrane which is generated by electron transport complexes of the respiratory chain. F-type ATPases consist of two structural domains, F(1) - containing the extramembraneous catalytic core and F(0) - containing the membrane proton channel, linked together by a central stalk and a peripheral stalk. During catalysis, ATP synthesis in the catalytic domain of F(1) is coupled via a rotary mechanism of the central stalk subunits to proton translocation. Key component of the proton channel; it may play a direct role in the translocation of protons across the membrane. The polypeptide is ATP synthase subunit a (ATP6) (Ascaris suum (Pig roundworm)).